The chain runs to 213 residues: Orotidine 5'-phosphate decarboxylase (213 aa).

Substrate-binding positions include Asp-11, Lys-33, 61-70 (DLKLADIPNT), Ser-113, 166-176 (PGVGAQGGKAS), Gly-189, and Arg-190. The Proton donor role is filled by Lys-63.

Belongs to the OMP decarboxylase family. Type 1 subfamily. As to quaternary structure, homodimer.

It carries out the reaction orotidine 5'-phosphate + H(+) = UMP + CO2. Its pathway is pyrimidine metabolism; UMP biosynthesis via de novo pathway; UMP from orotate: step 2/2. Its function is as follows. Catalyzes the decarboxylation of orotidine 5'-monophosphate (OMP) to uridine 5'-monophosphate (UMP). This chain is Orotidine 5'-phosphate decarboxylase, found in Thermococcus kodakarensis (strain ATCC BAA-918 / JCM 12380 / KOD1) (Pyrococcus kodakaraensis (strain KOD1)).